Here is a 141-residue protein sequence, read N- to C-terminus: Large ribosomal subunit protein uL22 (141 aa).

This sequence belongs to the universal ribosomal protein uL22 family. Part of the 50S ribosomal subunit.

Its function is as follows. This protein binds specifically to 23S rRNA; its binding is stimulated by other ribosomal proteins, e.g. L4, L17, and L20. It is important during the early stages of 50S assembly. It makes multiple contacts with different domains of the 23S rRNA in the assembled 50S subunit and ribosome. In terms of biological role, the globular domain of the protein is located near the polypeptide exit tunnel on the outside of the subunit, while an extended beta-hairpin is found that lines the wall of the exit tunnel in the center of the 70S ribosome. The protein is Large ribosomal subunit protein uL22 of Frankia alni (strain DSM 45986 / CECT 9034 / ACN14a).